We begin with the raw amino-acid sequence, 269 residues long: Sororin (269 aa).

Disordered regions lie at residues 1–39 (MSEGKKRSRGGLAIISPPKRRSQRKSTSDSPIPEPIMKR), 56–110 (VNTG…PKIN), and 146–169 (SLNSSSSLYSPTRKTDSSDTSTPN). A compositionally biased stretch (polar residues) spans 57–66 (NTGSQSTPKV). The KEN box motif lies at 85–87 (KEN). Positions 146–155 (SLNSSSSLYS) are enriched in low complexity. An FGF motif motif is present at residues 180 to 182 (FGF). The C-terminal Sororin domain stretch occupies residues 247–269 (LDEWAAFMNAEFEEAEKFDLTVE).

Belongs to the sororin family. In terms of assembly, interacts with the APC/C complex. Interacts with the chromatin-bound cohesin complex; the interaction is indirect, occurs after DNA replication and requires acetylation of the cohesin component smc3. Interacts (via the FGF motif) with pds5a and pds5b; the interaction is direct and prevents the interaction of pds5a with wapl. In terms of processing, ubiquitinated by the APC/C complex in G1, leading to its degradation.

It localises to the nucleus. Its subcellular location is the chromosome. The protein localises to the cytoplasm. In terms of biological role, regulator of sister chromatid cohesion in mitosis stabilizing cohesin complex association with chromatin. May antagonize the action of wapl which stimulates cohesin dissociation from chromatin. Cohesion ensures that chromosome partitioning is accurate in both meiotic and mitotic cells and plays an important role in DNA repair. Required for efficient DNA double-stranded break repair. This is Sororin (cdca5-a) from Xenopus laevis (African clawed frog).